The primary structure comprises 106 residues: uncharacterized protein (106 aa).

Residues 38–106 (KGNKKSKAAT…STHLPYHGSY (69 aa)) form a disordered region. Composition is skewed to basic and acidic residues over residues 57-71 (TRQERDLTDRKHRPE) and 82-96 (WKKEVTTRSRPKETS).

It localises to the mitochondrion. This is an uncharacterized protein from Arabidopsis thaliana (Mouse-ear cress).